A 108-amino-acid polypeptide reads, in one-letter code: UPF0060 membrane protein BH2744 (108 aa).

A run of 4 helical transmembrane segments spans residues 6–26, 31–51, 60–80, and 86–106; these read TLFL…WLWL, PVYL…IATF, VYAA…WWID, and TYDW…LWAP.

The protein belongs to the UPF0060 family.

It is found in the cell membrane. The sequence is that of UPF0060 membrane protein BH2744 from Halalkalibacterium halodurans (strain ATCC BAA-125 / DSM 18197 / FERM 7344 / JCM 9153 / C-125) (Bacillus halodurans).